A 110-amino-acid chain; its full sequence is Insulin-2 (110 aa).

The signal sequence occupies residues 1 to 24; the sequence is MALWMRFLPLLALLFLWESHPTQA. 3 disulfides stabilise this stretch: Cys31/Cys96, Cys43/Cys109, and Cys95/Cys100. Positions 57–87 are cleaved as a propeptide — c peptide; sequence EVEDPQVAQLELGGGPGAGDLQTLALEVAQQ.

It belongs to the insulin family. Heterodimer of a B chain and an A chain linked by two disulfide bonds.

The protein localises to the secreted. Insulin decreases blood glucose concentration. It increases cell permeability to monosaccharides, amino acids and fatty acids. It accelerates glycolysis, the pentose phosphate cycle, and glycogen synthesis in liver. The polypeptide is Insulin-2 (Ins2) (Mus musculus (Mouse)).